A 549-amino-acid polypeptide reads, in one-letter code: MLNQKIQNPNPDELMIEVDLCYELDPYELKLDEMIEAEPEPEMIEGLPASDALTPADRYLELFEHVQSAKIFPDSKTFPDCAPKMDPLDILIRYRKVRRHRDFDLRKFVENHFWLPEVYSSEYVSDPQNSLKEHIDQLWPVLTREPQDHIPWSSLLALPQSYIVPGGRFSETYYWDSYFTMLGLAESGREDLLKCMADNFAWMIENYGHIPNGNRTYYLSRSQPPVFALMVELFEEDGVRGARRYLDHLKMEYAFWMDGAESLIPNQAYRHVVRMPDGSLLNRYWDDRDTPRDESWLEDVETAKHSGRPPNEVYRDLRAGAASGWDYSSRWLRDTGRLASIRTTQFIPIDLNAFLFKLESAIANISALKGEKETEALFRQKASARRDAVKRYLWDDENGIYRDYDWRREQLALFSAAAIVPLYVGMANHEQADRLANAVRSRLLTPGGILASEYETGEQWDKPNGWAPLQWMAIQGFKMYGDDLLGDEIARSWLKTVNQFYLEQHKLIEKYHIADGVPREGGGGEYPLQDGFGWTNGVVRRLIGLYGEP.

Substrate is bound by residues R168, 175–176 (WD), N212, 221–223 (RSQ), 292–294 (RDE), and G324. Catalysis depends on proton donor/acceptor residues D326 and E509. E525 lines the substrate pocket.

This sequence belongs to the glycosyl hydrolase 37 family. Monomer.

Its subcellular location is the cytoplasm. The catalysed reaction is alpha,alpha-trehalose + H2O = alpha-D-glucose + beta-D-glucose. Its pathway is glycan degradation; trehalose degradation; D-glucose from alpha,alpha-trehalose: step 1/1. In terms of biological role, hydrolyzes trehalose to glucose. Could be involved, in cells returning to low osmolarity conditions, in the utilization of the accumulated cytoplasmic trehalose, which was synthesized in response to high osmolarity. The sequence is that of Cytoplasmic trehalase from Shigella boydii serotype 4 (strain Sb227).